Consider the following 185-residue polypeptide: Threonylcarbamoyl-AMP synthase (185 aa).

Positions 4–185 (SFRVQQAARE…LATGEVVRPG (182 aa)) constitute a YrdC-like domain.

Belongs to the SUA5 family. TsaC subfamily.

The protein resides in the cytoplasm. It carries out the reaction L-threonine + hydrogencarbonate + ATP = L-threonylcarbamoyladenylate + diphosphate + H2O. Its function is as follows. Required for the formation of a threonylcarbamoyl group on adenosine at position 37 (t(6)A37) in tRNAs that read codons beginning with adenine. Catalyzes the conversion of L-threonine, HCO(3)(-)/CO(2) and ATP to give threonylcarbamoyl-AMP (TC-AMP) as the acyladenylate intermediate, with the release of diphosphate. The chain is Threonylcarbamoyl-AMP synthase from Pseudomonas putida (strain ATCC 700007 / DSM 6899 / JCM 31910 / BCRC 17059 / LMG 24140 / F1).